The sequence spans 109 residues: Putative membrane protein insertion efficiency factor (109 aa).

The protein belongs to the UPF0161 family.

The protein localises to the cell inner membrane. Its function is as follows. Could be involved in insertion of integral membrane proteins into the membrane. The sequence is that of Putative membrane protein insertion efficiency factor from Rhodopseudomonas palustris (strain BisB18).